Here is a 448-residue protein sequence, read N- to C-terminus: MGKYFGTDGVRGVANKELTPELAFKIGRFGGYVLTKDTDRPKVIIGRDTRVSGHMLEGALVAGLLSTGAEVMRLGVISTPGVAYLTKALDAQAGVMISASHNPVQDNGIKFFGSDGFKLTDEQEAEIEALLDKEVDELPRPTGTNLGQVSDYFEGGQKYLQYIKQTVEEDFSGLHIALDCAHGATSSLAPYLFADLEADISTMGTSPNGMNINEGVGSTHPEGLAELVKEKGADIGLAFDGDGDRLIAVDEKGNIVDGDQIMFICAKYMKETGQLKHNTVVSTVMSNLGFYKALEANNITSDKTAVGDRYVMEEMKRGGYNLGGEQSGHIILLDYITTGDGMLSALQLVNIMKMTKKPLSELAGEMTKFPQLLVNVRVTDKKLALENEKIKEIIRVVEEEMNGDGRILVRPSGTEPLIRVMAEAPTQEVCDAYVHRIVEVVKAEVGAE.

The active-site Phosphoserine intermediate is Ser100. Ser100, Asp240, Asp242, and Asp244 together coordinate Mg(2+). Ser100 carries the phosphoserine modification.

The protein belongs to the phosphohexose mutase family. Mg(2+) serves as cofactor. Post-translationally, activated by phosphorylation.

It carries out the reaction alpha-D-glucosamine 1-phosphate = D-glucosamine 6-phosphate. Catalyzes the conversion of glucosamine-6-phosphate to glucosamine-1-phosphate. The protein is Phosphoglucosamine mutase of Bacillus cereus (strain B4264).